Here is a 359-residue protein sequence, read N- to C-terminus: Phospho-N-acetylmuramoyl-pentapeptide-transferase (359 aa).

10 consecutive transmembrane segments (helical) span residues 3 to 23, 55 to 75, 84 to 104, 117 to 137, 156 to 176, 187 to 207, 231 to 251, 255 to 275, 280 to 300, and 334 to 354; these read QIII…PVLI, VAIL…GIAF, GLLV…DDFI, TSKT…VLQF, IATV…LVMS, LDGL…IVTF, LAVI…WNAA, IFMG…LSVT, LLAV…VLQI, and FWLL…GEWL.

The protein belongs to the glycosyltransferase 4 family. MraY subfamily. Requires Mg(2+) as cofactor.

It is found in the cell membrane. It carries out the reaction UDP-N-acetyl-alpha-D-muramoyl-L-alanyl-gamma-D-glutamyl-meso-2,6-diaminopimeloyl-D-alanyl-D-alanine + di-trans,octa-cis-undecaprenyl phosphate = di-trans,octa-cis-undecaprenyl diphospho-N-acetyl-alpha-D-muramoyl-L-alanyl-D-glutamyl-meso-2,6-diaminopimeloyl-D-alanyl-D-alanine + UMP. It functions in the pathway cell wall biogenesis; peptidoglycan biosynthesis. Catalyzes the initial step of the lipid cycle reactions in the biosynthesis of the cell wall peptidoglycan: transfers peptidoglycan precursor phospho-MurNAc-pentapeptide from UDP-MurNAc-pentapeptide onto the lipid carrier undecaprenyl phosphate, yielding undecaprenyl-pyrophosphoryl-MurNAc-pentapeptide, known as lipid I. In Mycobacteroides abscessus (strain ATCC 19977 / DSM 44196 / CCUG 20993 / CIP 104536 / JCM 13569 / NCTC 13031 / TMC 1543 / L948) (Mycobacterium abscessus), this protein is Phospho-N-acetylmuramoyl-pentapeptide-transferase.